Reading from the N-terminus, the 1544-residue chain is Lysine-specific demethylase 5B (1544 aa).

The 42-residue stretch at 32–73 (CPVFEPSWEEFADPFAFIHKIRPIAEQTGICKVRPPPDWQPP) folds into the JmjN domain. Residues 97 to 187 (TRVKLNFLDQ…ILNPYNLFLS (91 aa)) form the ARID domain. Residues Lys148, Lys204, Lys209, Lys242, Lys274, and Lys278 each participate in a glycyl lysine isopeptide (Lys-Gly) (interchain with G-Cter in SUMO2) cross-link. Residues 201–230 (TDTKDKEYKPHDIPQRQSVQPSETCPPARR) form a disordered region. Positions 202-214 (DTKDKEYKPHDIP) are enriched in basic and acidic residues. The PHD-type 1 zinc finger occupies 309-359 (LYVCLLCGSGNDEDRLLLCDGCDDSYHTFCLIPPLHDVPKGDWRCPKCLAQ). Tyr425 provides a ligand contact to 2-oxoglutarate. One can recognise a JmjC domain in the interval 453–619 (EYLDSGWNLN…LGRQCVEHYR (167 aa)). Fe cation contacts are provided by His499 and Glu501. 2-oxoglutarate contacts are provided by Ser507, Asn509, and Lys517. His587 provides a ligand contact to Fe cation. Residues 692-744 (CVKCKTTCFMSAISCSCKPGLLVCLHHVKELCSCPPYKYKLRYRYTLDDLYPM) form a C5HC2 zinc finger. A Glycyl lysine isopeptide (Lys-Gly) (interchain with G-Cter in SUMO2) cross-link involves residue Lys769. Lys832 is modified (N6-acetyllysine). At Ser986 the chain carries Phosphoserine. A PHD-type 2 zinc finger spans residues 1176-1224 (IKICLCQKAPAAPMIQCELCRDAFHTSCVAVPSISQGLRIWLCPHCRRS). Residue Ser1328 is modified to Phosphoserine. Residues 1374 to 1400 (PSPAQQTDRSSPVRPSSEKNDCCRGKR) form a disordered region. The segment covering 1376-1387 (PAQQTDRSSPVR) has biased composition (polar residues). Residues 1389–1400 (SSEKNDCCRGKR) are compositionally biased toward basic and acidic residues. Lys1450 participates in a covalent cross-link: Glycyl lysine isopeptide (Lys-Gly) (interchain with G-Cter in SUMO2). At Ser1456 the chain carries Phosphoserine. The PHD-type 3 zinc finger occupies 1484–1538 (DAICPAVSCLQPEGDEVDWVQCDGSCNQWFHQVCVGVSPEMAEKEDYICVRCTVK).

The protein belongs to the JARID1 histone demethylase family. As to quaternary structure, interacts with FOXG1B, PAX9, MYC, MYCN and RB1. Interacts with HDAC1, HDAC4, HDAC5 and HDAC7. Interacts (via PHD-type 1 zinc finger) with histone H3 unmodified at 'Lys-4'; the interaction is inhibited when histone H3 is methylated at 'Arg-2' or 'Lys-4'. Requires Fe(2+) as cofactor. In terms of tissue distribution, ubiquitously expressed, with highest levels in testis. Down-regulated in melanoma and glioblastoma. Up-regulated in breast cancer (at protein level).

Its subcellular location is the nucleus. The catalysed reaction is N(6),N(6),N(6)-trimethyl-L-lysyl(4)-[histone H3] + 3 2-oxoglutarate + 3 O2 = L-lysyl(4)-[histone H3] + 3 formaldehyde + 3 succinate + 3 CO2. Its activity is regulated as follows. Several specific inhibitors are being developed and tested. The inhibitor KDOAM-25 inhibits its demethylase activity, resulting to cell cycle arrest in myeloma cells. Functionally, histone demethylase that demethylates 'Lys-4' of histone H3, thereby playing a central role in histone code. Does not demethylate histone H3 'Lys-9' or H3 'Lys-27'. Demethylates trimethylated, dimethylated and monomethylated H3 'Lys-4'. Acts as a transcriptional corepressor for FOXG1B and PAX9. Favors the proliferation of breast cancer cells by repressing tumor suppressor genes such as BRCA1 and HOXA5. In contrast, may act as a tumor suppressor for melanoma. Represses the CLOCK-BMAL1 heterodimer-mediated transcriptional activation of the core clock component PER2. The polypeptide is Lysine-specific demethylase 5B (KDM5B) (Homo sapiens (Human)).